The following is a 284-amino-acid chain: 3-methyl-2-oxobutanoate hydroxymethyltransferase 2 (284 aa).

Asp-49 and Asp-88 together coordinate Mg(2+). 3-methyl-2-oxobutanoate-binding positions include 49-50 (DS), Asp-88, and Lys-118. Residue Glu-120 participates in Mg(2+) binding. Catalysis depends on Glu-187, which acts as the Proton acceptor.

It belongs to the PanB family. In terms of assembly, homodecamer; pentamer of dimers. Mg(2+) serves as cofactor.

Its subcellular location is the cytoplasm. The catalysed reaction is 3-methyl-2-oxobutanoate + (6R)-5,10-methylene-5,6,7,8-tetrahydrofolate + H2O = 2-dehydropantoate + (6S)-5,6,7,8-tetrahydrofolate. It participates in cofactor biosynthesis; (R)-pantothenate biosynthesis; (R)-pantoate from 3-methyl-2-oxobutanoate: step 1/2. In terms of biological role, catalyzes the reversible reaction in which hydroxymethyl group from 5,10-methylenetetrahydrofolate is transferred onto alpha-ketoisovalerate to form ketopantoate. The protein is 3-methyl-2-oxobutanoate hydroxymethyltransferase 2 of Burkholderia ambifaria (strain ATCC BAA-244 / DSM 16087 / CCUG 44356 / LMG 19182 / AMMD) (Burkholderia cepacia (strain AMMD)).